Consider the following 264-residue polypeptide: 5'-nucleotidase SurE (264 aa).

4 residues coordinate a divalent metal cation: aspartate 10, aspartate 11, serine 43, and asparagine 99.

This sequence belongs to the SurE nucleotidase family. The cofactor is a divalent metal cation.

The protein resides in the cytoplasm. It carries out the reaction a ribonucleoside 5'-phosphate + H2O = a ribonucleoside + phosphate. Functionally, nucleotidase that shows phosphatase activity on nucleoside 5'-monophosphates. This Methanococcus maripaludis (strain C6 / ATCC BAA-1332) protein is 5'-nucleotidase SurE.